Consider the following 579-residue polypeptide: Alpha-glucosidase (579 aa).

Residue Asp-212 is the Nucleophile of the active site. The Proton donor role is filled by Glu-269.

The protein belongs to the glycosyl hydrolase 13 family.

The enzyme catalyses Hydrolysis of terminal, non-reducing (1-&gt;4)-linked alpha-D-glucose residues with release of alpha-D-glucose.. This is Alpha-glucosidase (mal1) from Schizosaccharomyces pombe (strain 972 / ATCC 24843) (Fission yeast).